We begin with the raw amino-acid sequence, 335 residues long: Photosystem II assembly lipoprotein Ycf48 (335 aa).

A signal peptide spans 1 to 23; sequence MSRLFSNLFNLLLIAAIGFGLSG. C24 carries N-palmitoyl cysteine lipidation. C24 carries the S-diacylglycerol cysteine lipid modification.

It belongs to the Ycf48 family. As to quaternary structure, part of early PSII assembly complexes which includes D1 (psbA) and PsbI; not found in mature PSII. Binds to the lumenal side of PSII complexes. Interacts with YidC.

Its subcellular location is the cellular thylakoid membrane. Its function is as follows. A factor required for optimal assembly of photosystem II (PSII), acting in the early stages of PSII assembly. Also plays a role in replacement of photodamaged D1 (psbA). Assists YidC in synthesis of chlorophyll-binding proteins. The sequence is that of Photosystem II assembly lipoprotein Ycf48 from Prochlorococcus marinus (strain MIT 9313).